Consider the following 391-residue polypeptide: DNA primase small subunit PriS (391 aa).

Active-site residues include Asp-98, Asp-100, and Asp-294.

Belongs to the eukaryotic-type primase small subunit family. In terms of assembly, heterodimer of a small subunit (PriS) and a large subunit (PriL). Requires Mg(2+) as cofactor. Mn(2+) is required as a cofactor.

Its function is as follows. Catalytic subunit of DNA primase, an RNA polymerase that catalyzes the synthesis of short RNA molecules used as primers for DNA polymerase during DNA replication. The small subunit contains the primase catalytic core and has DNA synthesis activity on its own. Binding to the large subunit stabilizes and modulates the activity, increasing the rate of DNA synthesis while decreasing the length of the DNA fragments, and conferring RNA synthesis capability. The DNA polymerase activity may enable DNA primase to also catalyze primer extension after primer synthesis. May also play a role in DNA repair. The polypeptide is DNA primase small subunit PriS (Halobacterium salinarum (strain ATCC 29341 / DSM 671 / R1)).